Here is a 370-residue protein sequence, read N- to C-terminus: MDFIRSEILGTKFETTIRYANVRPVGLGAFGLVCSAYDQITQQSVAIKKMMSPFASSAIAKRTYREVKLLKKLRHENLIGLCDIFISPLEDIYLVTELLGTDLSRLLRSKPLENKFAQFFMYQLMRGLKYIHSAGVIHRDLKPSNLLINENCDLKICDFGLARVQEPRMTGYVSTRYYRAPEIMLTWQRYGVEVDIWSAGCILAEMLRGVPLFPGKDHINQFYLITDMIGNPPLEVIEKITSKNTRHIVDSLPHKEPRQLKTIFNEEDAEAVDLLEKMLLFDQSKRISAAESLEHPYLAPYHDPTDEPVAEEKFDWSFNDADLPKESWKYMIYSEVLDFHSMEAHSSGYMTQDDFASVLEFVDQNQFAET.

Residues 19–298 (YANVRPVGLG…AAESLEHPYL (280 aa)) form the Protein kinase domain. Residues 25–33 (VGLGAFGLV) and Lys48 each bind ATP. Asp140 acts as the Proton acceptor in catalysis. Thr170 carries the post-translational modification Phosphothreonine. A TXY motif is present at residues 170–172 (TGY). Position 172 is a phosphotyrosine (Tyr172).

This sequence belongs to the protein kinase superfamily. Ser/Thr protein kinase family. MAP kinase subfamily. HOG1 sub-subfamily. Requires Mg(2+) as cofactor. In terms of processing, dually phosphorylated on Thr-170 and Tyr-172, which activates the enzyme.

It carries out the reaction L-seryl-[protein] + ATP = O-phospho-L-seryl-[protein] + ADP + H(+). It catalyses the reaction L-threonyl-[protein] + ATP = O-phospho-L-threonyl-[protein] + ADP + H(+). Its activity is regulated as follows. Activated by tyrosine and threonine phosphorylation. In terms of biological role, mitogen-activated protein kinase required for growth on media where sorbitol or mannitol is the sole carbon source. The protein is Mitogen-activated protein kinase mpkC (mpkC) of Aspergillus terreus (strain NIH 2624 / FGSC A1156).